The following is a 704-amino-acid chain: Capsule polysaccharide modification protein LipA (704 aa).

The protein resides in the cell inner membrane. Functionally, involved in the phospholipid modification of the capsular polysaccharide, a strong requirement for its translocation to the cell surface. In Neisseria meningitidis serogroup A / serotype 4A (strain DSM 15465 / Z2491), this protein is Capsule polysaccharide modification protein LipA (lipA).